Here is a 484-residue protein sequence, read N- to C-terminus: Protein nucleotidyltransferase YdiU (484 aa).

Residues Gly81, Gly83, Arg84, Lys103, Asp115, Gly116, Arg166, and Arg173 each coordinate ATP. The active-site Proton acceptor is the Asp244. Asn245 and Asp254 together coordinate Mg(2+). ATP is bound at residue Asp254.

Belongs to the SELO family. Mg(2+) is required as a cofactor. Requires Mn(2+) as cofactor.

The catalysed reaction is L-seryl-[protein] + ATP = 3-O-(5'-adenylyl)-L-seryl-[protein] + diphosphate. The enzyme catalyses L-threonyl-[protein] + ATP = 3-O-(5'-adenylyl)-L-threonyl-[protein] + diphosphate. It catalyses the reaction L-tyrosyl-[protein] + ATP = O-(5'-adenylyl)-L-tyrosyl-[protein] + diphosphate. It carries out the reaction L-histidyl-[protein] + UTP = N(tele)-(5'-uridylyl)-L-histidyl-[protein] + diphosphate. The catalysed reaction is L-seryl-[protein] + UTP = O-(5'-uridylyl)-L-seryl-[protein] + diphosphate. The enzyme catalyses L-tyrosyl-[protein] + UTP = O-(5'-uridylyl)-L-tyrosyl-[protein] + diphosphate. Functionally, nucleotidyltransferase involved in the post-translational modification of proteins. It can catalyze the addition of adenosine monophosphate (AMP) or uridine monophosphate (UMP) to a protein, resulting in modifications known as AMPylation and UMPylation. In Shewanella putrefaciens (strain CN-32 / ATCC BAA-453), this protein is Protein nucleotidyltransferase YdiU.